A 367-amino-acid chain; its full sequence is tRNA(Ile)-lysidine synthase (367 aa).

32–37 (SGGSDS) provides a ligand contact to ATP.

It belongs to the tRNA(Ile)-lysidine synthase family.

The protein resides in the cytoplasm. The catalysed reaction is cytidine(34) in tRNA(Ile2) + L-lysine + ATP = lysidine(34) in tRNA(Ile2) + AMP + diphosphate + H(+). Its function is as follows. Ligates lysine onto the cytidine present at position 34 of the AUA codon-specific tRNA(Ile) that contains the anticodon CAU, in an ATP-dependent manner. Cytidine is converted to lysidine, thus changing the amino acid specificity of the tRNA from methionine to isoleucine. This is tRNA(Ile)-lysidine synthase from Hyphomonas neptunium (strain ATCC 15444).